The chain runs to 391 residues: Phosphoprotein (391 aa).

Phosphothreonine occurs at positions 10 and 16. A compositionally biased stretch (polar residues) spans Gln-54–Gln-65. Disordered regions lie at residues Gln-54–Leu-97 and Pro-148–Gly-185. Phosphoserine is present on Ser-69. Thr-91, Thr-150, and Thr-165 each carry phosphothreonine. The residue at position 188 (Ser-188) is a Phosphoserine. A multimerization region spans residues Ile-216 to Gly-279. A coiled-coil region spans residues Ala-218–Gln-245. Position 250 is a phosphothreonine (Thr-250). Ser-257 is subject to Phosphoserine. Thr-258 and Thr-282 each carry phosphothreonine. Residues Ser-292 and Ser-294 each carry the phosphoserine modification. Phosphothreonine is present on Thr-298. Phosphoserine occurs at positions 301 and 374. The interaction with the nucleoprotein stretch occupies residues Ala-343 to Ile-391. Thr-375 carries the phosphothreonine modification.

This sequence belongs to the rubulavirus/avulavirus P protein family. Homotetramer. Interacts (via multimerization domain) with polymerase L; this interaction forms the polymerase L-P complex. Interacts (via N-terminus) with N0 (via Ncore); this interaction allows P to chaperon N0 to avoid N polymerization before encapsidation. Interacts (via C-terminus) with N-RNA template; this interaction positions the polymerase on the template for both transcription and replication. Interacts with host RPS6KB1 kinase; this interaction may play a role in the viral replication and transcription.

Essential cofactor of the RNA polymerase L that plays a central role in the transcription and replication by forming the polymerase complex with RNA polymerase L and recruiting L to the genomic N-RNA template for RNA synthesis. Also plays a central role in the encapsidation of nascent RNA chains by forming the encapsidation complex with the nucleocapsid protein N (N-P complex). Acts as a chaperone for newly synthesized free N protein, so-called N0, allowing encapsidation of nascent RNA chains during replication. The nucleoprotein protein N prevents excessive phosphorylation of P, which leads to down-regulation of viral transcription/ replication. Participates, together with N, in the formation of viral factories (viroplasms), which are large inclusions in the host cytoplasm where replication takes place. The protein is Phosphoprotein (P/V) of Homo sapiens (Human).